Here is a 286-residue protein sequence, read N- to C-terminus: ATP synthase gamma chain (286 aa).

It belongs to the ATPase gamma chain family. In terms of assembly, F-type ATPases have 2 components, CF(1) - the catalytic core - and CF(0) - the membrane proton channel. CF(1) has five subunits: alpha(3), beta(3), gamma(1), delta(1), epsilon(1). CF(0) has three main subunits: a, b and c.

The protein localises to the cell inner membrane. Produces ATP from ADP in the presence of a proton gradient across the membrane. The gamma chain is believed to be important in regulating ATPase activity and the flow of protons through the CF(0) complex. This is ATP synthase gamma chain from Alteromonas mediterranea (strain DSM 17117 / CIP 110805 / LMG 28347 / Deep ecotype).